A 45-amino-acid polypeptide reads, in one-letter code: Large ribosomal subunit protein bL34c (45 aa).

Belongs to the bacterial ribosomal protein bL34 family.

The protein localises to the plastid. It localises to the chloroplast. This is Large ribosomal subunit protein bL34c from Emiliania huxleyi (Coccolithophore).